The primary structure comprises 345 residues: Methionine import ATP-binding protein MetN 2 (345 aa).

Positions 4–243 (IELRHVKKEF…PQTEIAKRFI (240 aa)) constitute an ABC transporter domain. 40-47 (GYSGAGKS) provides a ligand contact to ATP.

It belongs to the ABC transporter superfamily. Methionine importer (TC 3.A.1.24) family. In terms of assembly, the complex is composed of two ATP-binding proteins (MetN), two transmembrane proteins (MetI) and a solute-binding protein (MetQ).

Its subcellular location is the cell membrane. The catalysed reaction is L-methionine(out) + ATP + H2O = L-methionine(in) + ADP + phosphate + H(+). It carries out the reaction D-methionine(out) + ATP + H2O = D-methionine(in) + ADP + phosphate + H(+). Part of the ABC transporter complex MetNIQ involved in methionine import. Responsible for energy coupling to the transport system. This chain is Methionine import ATP-binding protein MetN 2, found in Enterococcus faecalis (strain ATCC 700802 / V583).